The sequence spans 116 residues: Protein Wnt-5(I) (116 aa).

Ser1 carries the O-palmitoleoyl serine; by PORCN lipid modification. N-linked (GlcNAc...) asparagine glycosylation occurs at Asn69. Cys82 and Cys97 are oxidised to a cystine.

This sequence belongs to the Wnt family. Palmitoleoylation is required for efficient binding to frizzled receptors. Depalmitoleoylation leads to Wnt signaling pathway inhibition.

It is found in the secreted. The protein localises to the extracellular space. The protein resides in the extracellular matrix. Its function is as follows. Ligand for members of the frizzled family of seven transmembrane receptors. Probable developmental protein. May be a signaling molecule which affects the development of discrete regions of tissues. Is likely to signal over only few cell diameters. This chain is Protein Wnt-5(I) (WNT-5(I)), found in Eptatretus stoutii (Pacific hagfish).